Reading from the N-terminus, the 112-residue chain is Secretoglobin family 2B member 20 (112 aa).

A signal peptide spans 1–23 (MKGTLLLLGLLVTGELSFQTTEA). N-linked (GlcNAc...) asparagine glycosylation is present at Asn50.

It belongs to the secretoglobin family. As to expression, expressed in lacrimal gland, at higher level in males than females. Expressed in the submandibular gland.

It localises to the secreted. The chain is Secretoglobin family 2B member 20 (Scgb2b20) from Mus musculus (Mouse).